A 106-amino-acid chain; its full sequence is UPF0473 protein LCABL_08490 (106 aa).

The protein belongs to the UPF0473 family.

This chain is UPF0473 protein LCABL_08490, found in Lacticaseibacillus casei (strain BL23) (Lactobacillus casei).